Reading from the N-terminus, the 379-residue chain is Cytochrome b (379 aa).

4 helical membrane passes run 33 to 53, 77 to 98, 113 to 133, and 178 to 198; these read FGSL…FLAM, WLIR…FIHV, WNIG…GYVL, and FFAF…VHLL. The heme b site is built by His-83 and His-97. Residues His-182 and His-196 each contribute to the heme b site. His-201 contributes to the a ubiquinone binding site. Helical transmembrane passes span 226–246, 288–308, 320–340, and 347–367; these read TKDL…ALFF, LGGV…PLLN, VTQV…WIGG, and FTMI…ILMP.

It belongs to the cytochrome b family. As to quaternary structure, the cytochrome bc1 complex contains 11 subunits: 3 respiratory subunits (MT-CYB, CYC1 and UQCRFS1), 2 core proteins (UQCRC1 and UQCRC2) and 6 low-molecular weight proteins (UQCRH/QCR6, UQCRB/QCR7, UQCRQ/QCR8, UQCR10/QCR9, UQCR11/QCR10 and a cleavage product of UQCRFS1). This cytochrome bc1 complex then forms a dimer. Heme b serves as cofactor.

The protein resides in the mitochondrion inner membrane. Its function is as follows. Component of the ubiquinol-cytochrome c reductase complex (complex III or cytochrome b-c1 complex) that is part of the mitochondrial respiratory chain. The b-c1 complex mediates electron transfer from ubiquinol to cytochrome c. Contributes to the generation of a proton gradient across the mitochondrial membrane that is then used for ATP synthesis. In Akodon fumeus (Smoky grass mouse), this protein is Cytochrome b (MT-CYB).